A 515-amino-acid polypeptide reads, in one-letter code: E3 ubiquitin-protein ligase RNF38 (515 aa).

The Bipartite nuclear localization signal 1 motif lies at Asp-57 to Phe-71. Positions Tyr-73 to Asp-141 are disordered. Polar residues predominate over residues Met-89–His-104. The Bipartite nuclear localization signal 2 signature appears at Arg-115–Arg-131. The span at Arg-115–Arg-134 shows a compositional bias: basic residues. An RING-type zinc finger spans residues Cys-463–Arg-504.

Widely expressed with highest levels in testis.

Its subcellular location is the nucleus. The catalysed reaction is S-ubiquitinyl-[E2 ubiquitin-conjugating enzyme]-L-cysteine + [acceptor protein]-L-lysine = [E2 ubiquitin-conjugating enzyme]-L-cysteine + N(6)-ubiquitinyl-[acceptor protein]-L-lysine.. The protein operates within protein modification; protein ubiquitination. Functionally, acts as an E3 ubiquitin-protein ligase able to ubiquitinate p53/TP53 which promotes its relocalization to discrete foci associated with PML nuclear bodies. Exhibits preference for UBE2D2 as a E2 enzyme. The sequence is that of E3 ubiquitin-protein ligase RNF38 from Homo sapiens (Human).